The following is a 261-amino-acid chain: Phosphonates import ATP-binding protein PhnC (261 aa).

The ABC transporter domain maps to 8–253; it reads LRVENLSKTY…WFRRIYGEGA (246 aa). Position 41 to 48 (41 to 48) interacts with ATP; that stretch reads GLSGSGKS.

The protein belongs to the ABC transporter superfamily. Phosphonates importer (TC 3.A.1.9.1) family. As to quaternary structure, the complex is composed of two ATP-binding proteins (PhnC), two transmembrane proteins (PhnE) and a solute-binding protein (PhnD).

It localises to the cell inner membrane. The enzyme catalyses phosphonate(out) + ATP + H2O = phosphonate(in) + ADP + phosphate + H(+). Part of the ABC transporter complex PhnCDE involved in phosphonates import. Responsible for energy coupling to the transport system. This Bdellovibrio bacteriovorus (strain ATCC 15356 / DSM 50701 / NCIMB 9529 / HD100) protein is Phosphonates import ATP-binding protein PhnC.